The following is a 114-amino-acid chain: Large ribosomal subunit protein P1 (114 aa).

Positions 55-114 are disordered; sequence EEAAAAPAAAPAASGSDDEAAADDGDDDEEADADEAAEAEDAGDDDDEEPSGEGLGDLFG. A compositionally biased stretch (low complexity) spans 56 to 69; the sequence is EAAAAPAAAPAASG. Residues 70–105 are compositionally biased toward acidic residues; it reads SDDEAAADDGDDDEEADADEAAEAEDAGDDDDEEPS.

Belongs to the eukaryotic ribosomal protein P1/P2 family. As to quaternary structure, part of the 50S ribosomal subunit. Homodimer, it forms part of the ribosomal stalk which helps the ribosome interact with GTP-bound translation factors. Forms a heptameric uL10/P0(P1)2(P1)2(P1)2 complex, where uL10/P0 forms an elongated spine to which the P1 dimers bind in a sequential fashion.

Its function is as follows. Forms part of the ribosomal stalk, playing a central role in the interaction of the ribosome with GTP-bound translation factors. The protein is Large ribosomal subunit protein P1 of Halobacterium salinarum (strain ATCC 700922 / JCM 11081 / NRC-1) (Halobacterium halobium).